The primary structure comprises 215 residues: Cytochrome c biogenesis ATP-binding export protein CcmA (215 aa).

The 213-residue stretch at 3-215 folds into the ABC transporter domain; sequence LEAENLAGER…MAAFSVEDIA (213 aa). ATP is bound at residue 35-42; it reads GPNGSGKS.

It belongs to the ABC transporter superfamily. CcmA exporter (TC 3.A.1.107) family. The complex is composed of two ATP-binding proteins (CcmA) and two transmembrane proteins (CcmB).

The protein localises to the cell inner membrane. The enzyme catalyses heme b(in) + ATP + H2O = heme b(out) + ADP + phosphate + H(+). Its function is as follows. Part of the ABC transporter complex CcmAB involved in the biogenesis of c-type cytochromes; once thought to export heme, this seems not to be the case, but its exact role is uncertain. Responsible for energy coupling to the transport system. The sequence is that of Cytochrome c biogenesis ATP-binding export protein CcmA from Brucella abortus (strain 2308).